The following is a 105-amino-acid chain: Antithrombin-III (105 aa).

A signal peptide spans 1–17 (MHLFIGVSLRPLGHGIP). Positions 38–105 (ICIYRNPEKK…MRRTSSCRPS (68 aa)) are disordered. A compositionally biased stretch (basic and acidic residues) spans 43 to 53 (NPEKKPQERRG).

This sequence belongs to the serpin family. Forms protease inhibiting heterodimer with TMPRSS7. As to expression, plasma.

The protein resides in the secreted. The protein localises to the extracellular space. Most important serine protease inhibitor in plasma that regulates the blood coagulation cascade. AT-III inhibits thrombin, matriptase-3/TMPRSS7, as well as factors IXa, Xa and XIa. Its inhibitory activity is greatly enhanced in the presence of heparin. This Gallus gallus (Chicken) protein is Antithrombin-III (SERPINC1).